A 527-amino-acid chain; its full sequence is Cytochrome P450 monooygenase 3 (527 aa).

A helical transmembrane segment spans residues 21–41 (IAVAFAALCGATGLLAFSWWI). Cys473 is a heme binding site.

This sequence belongs to the cytochrome P450 family. It depends on heme as a cofactor.

The protein localises to the membrane. Its pathway is plant hormone biosynthesis; gibberellin biosynthesis. Gibberellin 13-hydroxylase; part of the gene cluster that mediates the biosynthesis of gibberellins (GAs), diterpenoids that may provide a selective advantage during infection of the preferred host plant, rice. Gibberellins (GAs) are diterpenoids and are synthesized via the mevalonate pathway. Biosynthesis of the major metabolite GA3 (gibberellic acid) from geranylgeranyl diphosphate (GGPP) requires 13 steps. The GGPP produced by the geranylgeranyl diphosphate synthase GGS2 is converted to ent-kaurene via ent-copalyldiphosphate in a two-step cyclization reaction performed by the bifunctional ent-copalyl diphosphate synthase/ent-kaurene synthase enzyme (CPS/KS). Ent-Kaurene is metabolized to GAs by a series of oxidation reactions catalyzed by cytochrome P450 monooxygenases. Cytochrome P450 monooxygenase P450-4 is an ent-kaurene oxidase that catalyzes the three oxidation steps between ent-kaurene and ent-kaurenoic acid. The highly multifunctional cytochrome P450 monooxygenase P450-1 then catalyzes four steps involving oxidation at two carbon atoms, in the main pathway from ent-kaurenoic acid to GA14 via GA12-aldehyde as well as producing kaurenolides and fujenoic acids as by-products. The cytochrome P450 monooxygenase P450-2 then converts GA14 to GA4 by removal of C-20. GA4 is further converted to GA7 by the GA4 desaturase DES via 1,2-desaturation before cytochrome P450 monooxygenase P450-3, a 13-hydroxylase, hydroxylates GA7 to GA3, the final product of the GA-biosynthetic pathway. This chain is Cytochrome P450 monooygenase 3, found in Gibberella fujikuroi (strain CBS 195.34 / IMI 58289 / NRRL A-6831) (Bakanae and foot rot disease fungus).